The primary structure comprises 179 residues: Cell division protein ZapC (179 aa).

Belongs to the ZapC family. As to quaternary structure, interacts directly with FtsZ.

Its subcellular location is the cytoplasm. Functionally, contributes to the efficiency of the cell division process by stabilizing the polymeric form of the cell division protein FtsZ. Acts by promoting interactions between FtsZ protofilaments and suppressing the GTPase activity of FtsZ. The sequence is that of Cell division protein ZapC from Ferrimonas balearica (strain DSM 9799 / CCM 4581 / KCTC 23876 / PAT).